We begin with the raw amino-acid sequence, 419 residues long: Histidine--tRNA ligase (419 aa).

Belongs to the class-II aminoacyl-tRNA synthetase family.

Its subcellular location is the cytoplasm. It catalyses the reaction tRNA(His) + L-histidine + ATP = L-histidyl-tRNA(His) + AMP + diphosphate + H(+). The chain is Histidine--tRNA ligase from Pyrobaculum arsenaticum (strain DSM 13514 / JCM 11321 / PZ6).